Here is a 331-residue protein sequence, read N- to C-terminus: Centriolar satellite-associated tubulin polyglutamylase complex regulator 1 (331 aa).

The required for interaction with PCM1 stretch occupies residues 1 to 111 (MLSPERLALP…HCLLQLLCPD (111 aa)). The tract at residues 1 to 225 (MLSPERLALP…SCPPPALVKE (225 aa)) is required for interaction with TPGS1, LRRC49, and TTLL1. The tract at residues 112–331 (FPLELTQKAA…STEETDESET (220 aa)) is required for interaction with TPGS2. Residues 292-331 (SCLPSRTPPRVGSPWKPLHRSRKLDAESDGSTEETDESET) are disordered. Residues 318 to 331 (ESDGSTEETDESET) are compositionally biased toward acidic residues. S319 bears the Phosphoserine mark.

It belongs to the CSTPP1 family. In terms of assembly, interacts with PCM1. Interacts with TTLL1, TPGS1, TPGS2 and LRRC49; the interactions link CSTPP1 to the complex TPGC. Binds to alpha-tubulin.

The protein localises to the cytoplasm. It localises to the cytoskeleton. The protein resides in the microtubule organizing center. Its subcellular location is the centrosome. It is found in the centriolar satellite. Its function is as follows. Regulator of the tubulin polyglutamylase complex (TPGC) that controls cytoskeletal organization, nuclear shape, and cilium disassembly by balancing microtubule and actin assembly. Regulates the assembly and stability of the TPGC and thereby modulates polyglutamylation of the microtubule, which antagonizes MAP4 binding. This is Centriolar satellite-associated tubulin polyglutamylase complex regulator 1 from Mus musculus (Mouse).